We begin with the raw amino-acid sequence, 325 residues long: tRNA U34 carboxymethyltransferase (325 aa).

Residues lysine 93, tryptophan 107, lysine 112, glycine 132, methionine 198, tyrosine 202, and arginine 317 each coordinate carboxy-S-adenosyl-L-methionine.

The protein belongs to the class I-like SAM-binding methyltransferase superfamily. CmoB family. Homotetramer.

It carries out the reaction carboxy-S-adenosyl-L-methionine + 5-hydroxyuridine(34) in tRNA = 5-carboxymethoxyuridine(34) in tRNA + S-adenosyl-L-homocysteine + H(+). Its function is as follows. Catalyzes carboxymethyl transfer from carboxy-S-adenosyl-L-methionine (Cx-SAM) to 5-hydroxyuridine (ho5U) to form 5-carboxymethoxyuridine (cmo5U) at position 34 in tRNAs. The protein is tRNA U34 carboxymethyltransferase of Desulforapulum autotrophicum (strain ATCC 43914 / DSM 3382 / VKM B-1955 / HRM2) (Desulfobacterium autotrophicum).